A 198-amino-acid chain; its full sequence is Ribonuclease HII (198 aa).

The region spanning 11 to 198 is the RNase H type-2 domain; the sequence is ELIAGVDEVG…SPVRKLLENE (188 aa). Residues Asp17, Glu18, and Asp109 each contribute to the a divalent metal cation site.

Belongs to the RNase HII family. It depends on Mn(2+) as a cofactor. Mg(2+) serves as cofactor.

It is found in the cytoplasm. The enzyme catalyses Endonucleolytic cleavage to 5'-phosphomonoester.. In terms of biological role, endonuclease that specifically degrades the RNA of RNA-DNA hybrids. The protein is Ribonuclease HII of Mannheimia succiniciproducens (strain KCTC 0769BP / MBEL55E).